Consider the following 1390-residue polypeptide: Contactin (1390 aa).

The N-terminal stretch at 1–18 (MLAKIGLLASILVLNLVG) is a signal peptide. Positions 25-67 (SENLPDPDPQSGQQPQNYQPSYNKDYSPRYNPLYTGQQSADPN) are disordered. Residues 58–67 (YTGQQSADPN) show a composition bias toward polar residues. 6 consecutive Ig-like C2-type domains span residues 362–463 (PYFV…AHLN), 468–561 (MEFN…LRVT), 576–656 (PKVF…IYIN), 661–745 (PQFT…TSFS), 756–843 (PSFK…ARVI), and 848–939 (IRFI…TSVS). Asn-369 carries N-linked (GlcNAc...) asparagine glycosylation. Intrachain disulfides connect Cys-388–Cys-446, Cys-489–Cys-540, Cys-593–Cys-640, and Cys-682–Cys-734. 5 N-linked (GlcNAc...) asparagine glycosylation sites follow: Asn-537, Asn-604, Asn-629, Asn-691, and Asn-774. Disulfide bonds link Cys-779/Cys-827 and Cys-870/Cys-923. Residues Asn-912, Asn-986, and Asn-991 are each glycosylated (N-linked (GlcNAc...) asparagine). Fibronectin type-III domains lie at 946–1048 (APGG…TYED), 1053–1151 (APRN…SAED), 1156–1254 (APQK…TYRK), and 1259–1357 (PPSS…MGKT). N-linked (GlcNAc...) asparagine glycans are attached at residues Asn-1166, Asn-1171, and Asn-1307. Ala-1362 carries GPI-anchor amidated alanine lipidation. A propeptide spans 1363-1390 (NTRHGHNINTALILSTLLLISTFLYTSQ) (removed in mature form).

The protein belongs to the immunoglobulin superfamily. Contactin family. As to quaternary structure, forms a complex with Nrg and Nrx. Forms a complex composed of septa junction proteins Nrx-IV/Nrx, Tsf2/MTf, Cont and Nrg during late embryogenesis. Post-translationally, N-glycosylated. In terms of tissue distribution, expressed in ectodermally derived epithelial cells from stage 12. All these tissues, such as epidermis, hindgut, foregut, salivary glands and trachea, which contain pleated septate junctions. Expressed by ectodermally derived epithelial cells and along peripheral nerves. Not present in midline glial cells. Expressed in epithelial cells and glial cells of peripheral nerves.

The protein resides in the cell membrane. It localises to the cell junction. It is found in the septate junction. Functionally, required for organization of septate junctions and paracellular barrier functions. Septate junctions, which are the equivalent of vertebrates tight junctions, are characterized by regular arrays of transverse structures that span the intermembrane space and form a physical barrier to diffusion. The protein is Contactin (Cont) of Drosophila melanogaster (Fruit fly).